Reading from the N-terminus, the 226-residue chain is LexA repressor (226 aa).

The H-T-H motif DNA-binding region spans 28 to 48 (RAEICQSLGFRSPNAAESHLR). Residues Ser-133 and Lys-170 each act as for autocatalytic cleavage activity in the active site.

Belongs to the peptidase S24 family. In terms of assembly, homodimer.

It catalyses the reaction Hydrolysis of Ala-|-Gly bond in repressor LexA.. In terms of biological role, represses a number of genes involved in the response to DNA damage (SOS response), including recA and lexA. In the presence of single-stranded DNA, RecA interacts with LexA causing an autocatalytic cleavage which disrupts the DNA-binding part of LexA, leading to derepression of the SOS regulon and eventually DNA repair. The chain is LexA repressor from Halorhodospira halophila (strain DSM 244 / SL1) (Ectothiorhodospira halophila (strain DSM 244 / SL1)).